A 172-amino-acid polypeptide reads, in one-letter code: MSKVKKNEETLSEVLVDVNRITKVVKGGRRFAFSACMVVGDKAGRVGAGHGKAKEVNEARGKAKQAAKKRMMKVPLYQNRTIHHDVIGKSGAAKVILRRAKAGTGVIAGGSMRAIFHSLGVHDIVAKSIGSTNVYAMISATFDALNKLASPKSIAMRRDKRVNEISVKSYDV.

Residues 11–74 form the S5 DRBM domain; that stretch reads LSEVLVDVNR…QAAKKRMMKV (64 aa).

This sequence belongs to the universal ribosomal protein uS5 family. As to quaternary structure, part of the 30S ribosomal subunit. Contacts proteins S4 and S8.

With S4 and S12 plays an important role in translational accuracy. In terms of biological role, located at the back of the 30S subunit body where it stabilizes the conformation of the head with respect to the body. The polypeptide is Small ribosomal subunit protein uS5 (Rickettsia canadensis (strain McKiel)).